Reading from the N-terminus, the 313-residue chain is Beta-lactamase BRO-1 (313 aa).

Positions 1–25 (MQRRHFLQKTLLALPIIFSGNLLTG) are cleaved as a signal peptide. Cys-26 carries the N-palmitoyl cysteine lipid modification. Cys-26 carries the S-diacylglycerol cysteine lipid modification. Ser-90 serves as the catalytic Acyl-ester intermediate. 255-257 (KTG) lines the substrate pocket.

This sequence belongs to the class-A beta-lactamase family.

The protein localises to the cell membrane. It catalyses the reaction a beta-lactam + H2O = a substituted beta-amino acid. The protein is Beta-lactamase BRO-1 (bla) of Moraxella catarrhalis (Branhamella catarrhalis).